Reading from the N-terminus, the 465-residue chain is Argininosuccinate lyase (465 aa).

Belongs to the lyase 1 family. Argininosuccinate lyase subfamily.

It localises to the cytoplasm. The enzyme catalyses 2-(N(omega)-L-arginino)succinate = fumarate + L-arginine. It participates in amino-acid biosynthesis; L-arginine biosynthesis; L-arginine from L-ornithine and carbamoyl phosphate: step 3/3. The sequence is that of Argininosuccinate lyase from Rhodopseudomonas palustris (strain BisB5).